Reading from the N-terminus, the 209-residue chain is Thymidylate kinase (209 aa).

10–17 (GLEGAGKS) is an ATP binding site.

It belongs to the thymidylate kinase family.

It carries out the reaction dTMP + ATP = dTDP + ADP. Phosphorylation of dTMP to form dTDP in both de novo and salvage pathways of dTTP synthesis. The chain is Thymidylate kinase from Photobacterium profundum (strain SS9).